Reading from the N-terminus, the 399-residue chain is Probable 3-ketosteroid-9-alpha-monooxygenase, oxygenase component (399 aa).

The Rieske domain occupies 26–128; the sequence is WHCLGLVRDF…VAEVSGQLFV (103 aa). Positions 67, 69, 86, and 89 each coordinate [2Fe-2S] cluster. Fe cation-binding residues include Asn175, His181, His186, and Asp307.

In terms of assembly, homotrimer. The two-component system 3-ketosteroid-9-alpha-monooxygenase is composed of an oxygenase component KshA and a reductase component KshB. Requires [2Fe-2S] cluster as cofactor. Fe cation is required as a cofactor.

Functionally, could catalyze the introduction of a 9alpha-hydroxyl moiety into the ring B of 3-ketosteroid substrates. This chain is Probable 3-ketosteroid-9-alpha-monooxygenase, oxygenase component, found in Rhodococcus rhodochrous.